Consider the following 583-residue polypeptide: Poly [ADP-ribose] polymerase 2 (583 aa).

The tract at residues 1–77 (MAARRRRSTG…GMPGRSWASK (77 aa)) is disordered. Residues 1-103 (MAARRRRSTG…VDPECTAKVG (103 aa)) are N-terminal region (NTR). 2 consecutive short sequence motifs (nuclear localization signal) follow at residues 21–22 (KR) and 35–40 (PAKKTR). An N6-acetyllysine mark is found at K37 and K38. Positions 57–67 (ANKDRTEDKQD) are enriched in basic and acidic residues. The region spanning 104 to 201 (KAHVYCEGND…EKFEKVPGKY (98 aa)) is the WGR domain. Residues S226 and S232 each carry the phosphoserine modification. Residues 231–348 (ESQLDLRVQE…DIEIAIKLVK (118 aa)) form the PARP alpha-helical domain. In terms of domain architecture, PARP catalytic spans 356–583 (HPLDQHYRNL…KVQFNFLQLW (228 aa)). NAD(+) contacts are provided by residues 428 to 430 (HGS), G437, R444, and S470. Residue E558 is the For poly [ADP-ribose] polymerase activity of the active site.

This sequence belongs to the ARTD/PARP family. In terms of assembly, component of a base excision repair (BER) complex, containing at least XRCC1, PARP1, POLB and LRIG3. Homo- and heterodimer with PARP1. Interacts (via the PARP catalytic domain) with HPF1. Interacts with core nucleosomes. In terms of processing, auto poly-ADP-ribosylated on serine residues, leading to dissociation of the PARP2-HPF1 complex from chromatin. Poly-ADP-ribosylated by PARP1. Post-translationally, acetylation reduces DNA binding and enzymatic activity. Proteolytically cleaved by caspase-8 (CASP8) in response to apoptosis, leading to its inactivation. Widely expressed, mainly in actively dividing tissues. The highest levels are in the brain, heart, pancreas, skeletal muscle and testis; also detected in kidney, liver, lung, placenta, ovary and spleen; levels are low in leukocytes, colon, small intestine, prostate and thymus.

The protein resides in the nucleus. It is found in the chromosome. The catalysed reaction is NAD(+) + (ADP-D-ribosyl)n-acceptor = nicotinamide + (ADP-D-ribosyl)n+1-acceptor + H(+).. The enzyme catalyses L-seryl-[protein] + NAD(+) = O-(ADP-D-ribosyl)-L-seryl-[protein] + nicotinamide + H(+). It catalyses the reaction L-aspartyl-[protein] + NAD(+) = 4-O-(ADP-D-ribosyl)-L-aspartyl-[protein] + nicotinamide. It carries out the reaction L-glutamyl-[protein] + NAD(+) = 5-O-(ADP-D-ribosyl)-L-glutamyl-[protein] + nicotinamide. ADP-ribosyltransferase activity is regulated via an allosteric activation mechanism. In absence of activation signal, PARP2 is autoinhibited by the PARP alpha-helical domain (also named HD region), which prevents effective NAD(+)-binding. Activity is highly stimulated by signals, which unfold the PARP alpha-helical domain, relieving autoinhibition. Poly-ADP-ribosyltransferase activity is tightly regulated and PARP2 is removed from damaged chromatin following initial poly-ADP-ribosylation of chromatin to avoid prolonged residence (trapping) that has cytotoxic consequences. CHD1L promotes PARP2 removal from chromatin. ADP-ribosyltransferase activity is inhibited by a number of PARP inhibitors (PARPi) compounds, that are used the treatment of breast or ovarian cancers that have defects in DNA repair by homologous recombination. PARPi molecules (niraparib, talazoparib, and, to a lesser extent, olaparib) also trap PARP2 at DNA damage sites. Poly-ADP-ribosyltransferase that mediates poly-ADP-ribosylation of proteins and plays a key role in DNA repair. Mediates glutamate, aspartate or serine ADP-ribosylation of proteins: the ADP-D-ribosyl group of NAD(+) is transferred to the acceptor carboxyl group of target residues and further ADP-ribosyl groups are transferred to the 2'-position of the terminal adenosine moiety, building up a polymer with an average chain length of 20-30 units. Serine ADP-ribosylation of proteins constitutes the primary form of ADP-ribosylation of proteins in response to DNA damage. Mediates glutamate and aspartate ADP-ribosylation of target proteins in absence of HPF1. Following interaction with HPF1, catalyzes serine ADP-ribosylation of target proteins; HPF1 conferring serine specificity by completing the PARP2 active site. PARP2 initiates the repair of double-strand DNA breaks: recognizes and binds DNA breaks within chromatin and recruits HPF1, licensing serine ADP-ribosylation of target proteins, such as histones, thereby promoting decompaction of chromatin and the recruitment of repair factors leading to the reparation of DNA strand breaks. HPF1 initiates serine ADP-ribosylation but restricts the polymerase activity of PARP2 in order to limit the length of poly-ADP-ribose chains. Specifically mediates formation of branched poly-ADP-ribosylation. Branched poly-ADP-ribose chains are specifically recognized by some factors, such as APLF. In addition to proteins, also able to ADP-ribosylate DNA: preferentially acts on 5'-terminal phosphates at DNA strand breaks termini in nicked duplex. This chain is Poly [ADP-ribose] polymerase 2, found in Homo sapiens (Human).